The sequence spans 271 residues: Phosphonates import ATP-binding protein PhnC 2 (271 aa).

In terms of domain architecture, ABC transporter spans 2–246 (LTVDNLEKTY…ARDEIYRGGE (245 aa)). 35–42 (GPSGAGKS) provides a ligand contact to ATP. Positions 243-254 (RGGESIADREEP) are enriched in basic and acidic residues. The disordered stretch occupies residues 243–271 (RGGESIADREEPSAGNSTDADDVIAERGD).

Belongs to the ABC transporter superfamily. Phosphonates importer (TC 3.A.1.9.1) family. In terms of assembly, the complex is composed of two ATP-binding proteins (PhnC), two transmembrane proteins (PhnE) and a solute-binding protein (PhnD).

It localises to the cell membrane. The catalysed reaction is phosphonate(out) + ATP + H2O = phosphonate(in) + ADP + phosphate + H(+). Part of the ABC transporter complex PhnCDE involved in phosphonates import. Responsible for energy coupling to the transport system. The chain is Phosphonates import ATP-binding protein PhnC 2 from Haloarcula marismortui (strain ATCC 43049 / DSM 3752 / JCM 8966 / VKM B-1809) (Halobacterium marismortui).